We begin with the raw amino-acid sequence, 61 residues long: Large ribosomal subunit protein uL29 (61 aa).

This sequence belongs to the universal ribosomal protein uL29 family.

The polypeptide is Large ribosomal subunit protein uL29 (Campylobacter jejuni subsp. jejuni serotype O:6 (strain 81116 / NCTC 11828)).